The chain runs to 235 residues: Glycerol uptake facilitator protein 2 (235 aa).

Transmembrane regions (helical) follow at residues 4-24 (FLGE…SGAA), 39-59 (FICL…GQFG), 62-82 (GHLN…PMAN), 83-103 (VWPY…IVII), 134-154 (VFNF…LLNL), and 165-185 (MVGL…GFAI). The NPA 1 motif lies at 65–67 (NPA). The short motif at 186–188 (NPA) is the NPA 2 element. A helical transmembrane segment spans residues 210–230 (WGYAWVPMFGPLLGGILAAGL).

This sequence belongs to the MIP/aquaporin (TC 1.A.8) family.

The protein localises to the cell membrane. Transporter that facilitates the transmembrane diffusion of water, dihydroxyacetone, glycerol and H(2)O(2). Is not permeable to urea and D/L-lactic acid. The polypeptide is Glycerol uptake facilitator protein 2 (Lactiplantibacillus plantarum (strain ATCC BAA-793 / NCIMB 8826 / WCFS1) (Lactobacillus plantarum)).